The sequence spans 988 residues: Ubiquitin carboxyl-terminal hydrolase 36 (988 aa).

A disordered region spans residues 16–55; the sequence is PTLRTDNNGARKQAEHPNNQSHHNHPHPTSNPNELPKPKR. Residues 31–48 show a composition bias toward low complexity; sequence HPNNQSHHNHPHPTSNPN. One can recognise a USP domain in the interval 78 to 386; the sequence is TGMINVGNTC…NAYIMFFELD (309 aa). C87 (nucleophile) is an active-site residue. H345 acts as the Proton acceptor in catalysis. 3 disordered regions span residues 393 to 422, 483 to 782, and 868 to 988; these read PPAN…SPSP, ATSA…VTSN, and EQRQ…QQQT. Low complexity-rich tracts occupy residues 408–422 and 490–509; these read STTP…SPSP and NGNK…KSIN. S419 and S421 each carry phosphoserine. Residues 532-544 show a composition bias toward polar residues; it reads TTAQLPSMPNMTE. 2 positions are modified to phosphothreonine: T561 and T565. A phosphoserine mark is found at S575 and S577. Acidic residues predominate over residues 592–601; the sequence is EGEDFSESDQ. Residues 602-631 show a composition bias toward polar residues; it reads ESGQTNGHSKTNGSLTNGSASSSVHVNNSK. A compositionally biased stretch (basic and acidic residues) spans 632–649; that stretch reads QKTDAIDEIFKSLKKSAD. S650 carries the phosphoserine modification. Residues 650-659 show a composition bias toward acidic residues; sequence SEEDDDEEEP. Low complexity predominate over residues 669 to 679; sequence PQKQSQSQSKA. Residues 680 to 689 are compositionally biased toward pro residues; that stretch reads PPSPKTPPSP. S682 carries the post-translational modification Phosphoserine. T685 bears the Phosphothreonine mark. S688 carries the phosphoserine modification. A compositionally biased stretch (acidic residues) spans 707 to 717; it reads VDAIDDDDDAV. T728 is subject to Phosphothreonine. The segment covering 735–747 has biased composition (polar residues); it reads NPFSSSKPSTDSP. A Phosphoserine modification is found at S746. Position 749 is a phosphothreonine (T749). Residues 762–782 show a composition bias toward polar residues; sequence ALKSHQQPRVGNGYQSNVTSN. Low complexity-rich tracts occupy residues 892-903 and 930-943; these read SGSAKGNNASNS and RFHN…FQQR.

The protein belongs to the peptidase C19 family. Interacts with atms/PAF1, but not with CycT.

It localises to the nucleus. The protein localises to the nucleolus. It carries out the reaction Thiol-dependent hydrolysis of ester, thioester, amide, peptide and isopeptide bonds formed by the C-terminal Gly of ubiquitin (a 76-residue protein attached to proteins as an intracellular targeting signal).. Required for maintaining multiple types of adult stem cells, including male and female germline, epithelial follicle cell and intestinal stem cells. May function as a transcriptional repressor by continually deubiquiting histone H2B at the promoters of genes critical for cellular differentiation, thereby preventing histone H3 'Lys-4' trimethylation (H3K4). Controls selective autophagy activation by ubiquitinated proteins. In Drosophila simulans (Fruit fly), this protein is Ubiquitin carboxyl-terminal hydrolase 36 (Usp36).